Consider the following 262-residue polypeptide: Acyl-[acyl-carrier-protein]--UDP-N-acetylglucosamine O-acyltransferase (262 aa).

This sequence belongs to the transferase hexapeptide repeat family. LpxA subfamily. As to quaternary structure, homotrimer.

Its subcellular location is the cytoplasm. The enzyme catalyses a (3R)-hydroxyacyl-[ACP] + UDP-N-acetyl-alpha-D-glucosamine = a UDP-3-O-[(3R)-3-hydroxyacyl]-N-acetyl-alpha-D-glucosamine + holo-[ACP]. Its pathway is glycolipid biosynthesis; lipid IV(A) biosynthesis; lipid IV(A) from (3R)-3-hydroxytetradecanoyl-[acyl-carrier-protein] and UDP-N-acetyl-alpha-D-glucosamine: step 1/6. Functionally, involved in the biosynthesis of lipid A, a phosphorylated glycolipid that anchors the lipopolysaccharide to the outer membrane of the cell. The sequence is that of Acyl-[acyl-carrier-protein]--UDP-N-acetylglucosamine O-acyltransferase from Verminephrobacter eiseniae (strain EF01-2).